Consider the following 1040-residue polypeptide: Multidrug resistance protein MdtB (1040 aa).

Transmembrane regions (helical) follow at residues 16–36, 342–362, 373–393, 396–416, 440–460, 472–492, 537–557, 865–885, 888–908, 911–931, 968–988, and 1002–1022; these read FILRPVATTLLMVAILLAGLV, DVQFELLLAIALVVMVIYLFL, IAVPLSLVGTFAAMYFLGFSV, LTLMALTIATGFVVDDAIVVI, IGFTIISLTFSLIAVLIPLLF, FAVTLAVSILISAIVSLTLTP, WITLSVAIGTLVLTVLLYIVI, STIWLVVAAIVAMYIVLGVLY, FIHPVTILSTLPTAGVGALLA, ISGSDLNIIAIIGIILLIGIV, ILMTTMAALLSAVPLMFSTGV, and GGLVMSQVLTLFTTPVIYLLF.

It belongs to the resistance-nodulation-cell division (RND) (TC 2.A.6) family. MdtB subfamily. As to quaternary structure, part of a tripartite efflux system composed of MdtA, MdtB and MdtC. MdtB forms a heteromultimer with MdtC.

The protein resides in the cell inner membrane. The chain is Multidrug resistance protein MdtB from Musicola paradisiaca (strain Ech703) (Dickeya paradisiaca).